We begin with the raw amino-acid sequence, 411 residues long: Na(+)-translocating NADH-quinone reductase subunit F (411 aa).

A helical transmembrane segment spans residues 6–26 (AIGGVAMFTLIIMGLVAIILA). A 2Fe-2S ferredoxin-type domain is found at 35–129 (GDVTIHINDN…DMKIEIDPEF (95 aa)). [2Fe-2S] cluster contacts are provided by C72, C78, C81, and C113. The 142-residue stretch at 132–273 (VQKWECEVIS…SGPYGEFFAK (142 aa)) folds into the FAD-binding FR-type domain.

The protein belongs to the NqrF family. In terms of assembly, composed of six subunits; NqrA, NqrB, NqrC, NqrD, NqrE and NqrF. [2Fe-2S] cluster is required as a cofactor. FAD serves as cofactor.

Its subcellular location is the cell inner membrane. It carries out the reaction a ubiquinone + n Na(+)(in) + NADH + H(+) = a ubiquinol + n Na(+)(out) + NAD(+). Functionally, NQR complex catalyzes the reduction of ubiquinone-1 to ubiquinol by two successive reactions, coupled with the transport of Na(+) ions from the cytoplasm to the periplasm. The first step is catalyzed by NqrF, which accepts electrons from NADH and reduces ubiquinone-1 to ubisemiquinone by a one-electron transfer pathway. In Psychrobacter cryohalolentis (strain ATCC BAA-1226 / DSM 17306 / VKM B-2378 / K5), this protein is Na(+)-translocating NADH-quinone reductase subunit F.